The sequence spans 99 residues: High mobility group nucleosome-binding domain-containing protein 3 (99 aa).

Composition is skewed to basic and acidic residues over residues 1–25 (MPKR…EPTR), 39–53 (PEPK…KEPG), and 62–72 (GKKEEKQEAGK). Residues 1–99 (MPKRKSPENT…KTESVDNEGE (99 aa)) are disordered. S6 is subject to Phosphoserine. T10 bears the Phosphothreonine mark. Phosphoserine is present on residues S78 and S93. Over residues 81–93 (GETKAEEAQKTES) the composition is skewed to basic and acidic residues.

This sequence belongs to the HMGN family. In terms of assembly, interacts with the ligand binding domain of the thyroid receptor (TR) (in vitro). Requires the presence of thyroid hormone for its interaction. Interacts with transcriptional regulator SEHBP. Interacts with nucleosomes. Expressed in kidney, lung, pancreas, testis, skeletal muscle, heart, thyroid gland, pituitary gland, prostate and uterus. Low expression in liver, spleen, placenta and ovaries.

It localises to the nucleus. In terms of biological role, binds to nucleosomes, regulating chromatin structure and consequently, chromatin-dependent processes such as transcription, DNA replication and DNA repair. Affects both insulin and glucagon levels and modulates the expression of pancreatic genes involved in insulin secretion. Regulates the expression of the glucose transporter SLC2A2 by binding specifically to its promoter region and recruiting PDX1 and additional transcription factors. Regulates the expression of SLC6A9, a glycine transporter which regulates the glycine concentration in synaptic junctions in the central nervous system, by binding to its transcription start site. May play a role in ocular development and astrocyte function. This chain is High mobility group nucleosome-binding domain-containing protein 3 (HMGN3), found in Homo sapiens (Human).